A 73-amino-acid polypeptide reads, in one-letter code: uncharacterized protein (73 aa).

This is an uncharacterized protein from Treponema pallidum (strain Nichols).